The chain runs to 196 residues: Peroxiredoxin TSA1 (196 aa).

Positions 3–161 constitute a Thioredoxin domain; the sequence is AQVQKQAPTF…ALRLVEAFQW (159 aa). Lys14 is covalently cross-linked (Glycyl lysine isopeptide (Lys-Gly) (interchain with G-Cter in ubiquitin)). Residue 45–47 participates in substrate binding; sequence TFV. Residue Cys48 is the Cysteine sulfenic acid (-SOH) intermediate of the active site. Lys89 is covalently cross-linked (Glycyl lysine isopeptide (Lys-Gly) (interchain with G-Cter in ubiquitin)). Arg124 contributes to the substrate binding site. Lys132 is covalently cross-linked (Glycyl lysine isopeptide (Lys-Gly) (interchain with G-Cter in ubiquitin)). Thr174 carries the phosphothreonine modification.

Belongs to the peroxiredoxin family. AhpC/Prx1 subfamily. In terms of assembly, homodimer; disulfide-linked, upon oxidation. Interacts with YAP1 via transient disulfide linkages. In terms of processing, the enzyme can be inactivated by further oxidation of the cysteine sulfenic acid (C(P)-SOH) to sulphinic acid (C(P)-SO2H) instead of its condensation to a disulfide bond. It can be reactivated by forming a transient disulfide bond with sulfiredoxin SRX1, which reduces the cysteine sulfinic acid in an ATP- and Mg-dependent manner.

It localises to the cytoplasm. The catalysed reaction is a hydroperoxide + [thioredoxin]-dithiol = an alcohol + [thioredoxin]-disulfide + H2O. Its function is as follows. Thiol-specific peroxidase that catalyzes the reduction of hydrogen peroxide and organic hydroperoxides to water and alcohols, respectively. Plays a role in cell protection against oxidative stress by detoxifying peroxides and as sensor of hydrogen peroxide-mediated signaling events. Protects the cell against the oxidative stress caused by nascent-protein misfolding and aggregation. Relays hydrogen peroxide as a signal to the transcription factor YAP1 by inducing the formation of intramolecular disulfide bonds in YAP1, which causes its nuclear accumulation and activation. Can act alternatively as peroxidase and molecular chaperone. Oxidative stress and heat shock exposure cause a reversible shift of the protein structure from low MW species to high MW complexes, triggering a peroxidase-to-chaperone functional switch. The chaperone function of the protein enhances resistance to heat shock. The sequence is that of Peroxiredoxin TSA1 from Saccharomyces cerevisiae (strain ATCC 204508 / S288c) (Baker's yeast).